The primary structure comprises 1058 residues: Ubiquitin-like modifier-activating enzyme 1 (1058 aa).

Residues 1–47 (MSSSPLSKKRRVSGPDPKPGSNCSPAQSVLSEVPSVPTNGMAKNGSE) are disordered. Ser-2 bears the N-acetylserine mark. Ser-2 carries the N-acetylalanine modification. Ser-4 bears the Phosphoserine mark. Positions 5–11 (PLSKKRR) match the Nuclear localization signal motif. Phosphoserine is present on residues Ser-13, Ser-21, Ser-24, and Ser-46. Residues 21–30 (SNCSPAQSVL) are compositionally biased toward polar residues. The residue at position 55 (Tyr-55) is a Phosphotyrosine. A run of 2 repeats spans residues 63 to 199 (GHEA…GQLF) and 459 to 611 (GSDL…QVVI). The tract at residues 63–611 (GHEAMKRLQT…GTKGNVQVVI (549 aa)) is 2 approximate repeats. ATP-binding positions include Ala-478, Asp-504, Arg-515, Lys-528, and 576–577 (DN). The residue at position 528 (Lys-528) is an N6-succinyllysine. Cys-632 acts as the Glycyl thioester intermediate in catalysis. Residue Lys-671 is modified to N6-acetyllysine. Thr-800 bears the Phosphothreonine mark. A phosphoserine mark is found at Ser-810, Ser-816, Ser-820, and Ser-835. Residue Lys-980 is modified to N6-acetyllysine.

The protein belongs to the ubiquitin-activating E1 family. Monomer. Interacts with GAN (via BTB domain). Post-translationally, ISGylated. In terms of tissue distribution, detected in erythrocytes (at protein level). Ubiquitous.

It is found in the cytoplasm. Its subcellular location is the mitochondrion. The protein localises to the nucleus. It catalyses the reaction ATP + ubiquitin + [E1 ubiquitin-activating enzyme]-L-cysteine = AMP + diphosphate + S-ubiquitinyl-[E1 ubiquitin-activating enzyme]-L-cysteine.. It functions in the pathway protein modification; protein ubiquitination. Functionally, catalyzes the first step in ubiquitin conjugation to mark cellular proteins for degradation through the ubiquitin-proteasome system. Activates ubiquitin by first adenylating its C-terminal glycine residue with ATP, and thereafter linking this residue to the side chain of a cysteine residue in E1, yielding a ubiquitin-E1 thioester and free AMP. Essential for the formation of radiation-induced foci, timely DNA repair and for response to replication stress. Promotes the recruitment of TP53BP1 and BRCA1 at DNA damage sites. The chain is Ubiquitin-like modifier-activating enzyme 1 (UBA1) from Homo sapiens (Human).